Reading from the N-terminus, the 420-residue chain is Histidine--tRNA ligase (420 aa).

Belongs to the class-II aminoacyl-tRNA synthetase family. As to quaternary structure, homodimer.

It is found in the cytoplasm. The enzyme catalyses tRNA(His) + L-histidine + ATP = L-histidyl-tRNA(His) + AMP + diphosphate + H(+). The sequence is that of Histidine--tRNA ligase from Staphylococcus saprophyticus subsp. saprophyticus (strain ATCC 15305 / DSM 20229 / NCIMB 8711 / NCTC 7292 / S-41).